A 346-amino-acid polypeptide reads, in one-letter code: Biotin synthase (346 aa).

Positions 38 to 256 (RQVQVSTLLS…IAIARIMMPT (219 aa)) constitute a Radical SAM core domain. Cys-53, Cys-57, and Cys-60 together coordinate [4Fe-4S] cluster. Cys-97, Cys-128, Cys-188, and Arg-260 together coordinate [2Fe-2S] cluster.

The protein belongs to the radical SAM superfamily. Biotin synthase family. As to quaternary structure, homodimer. Requires [4Fe-4S] cluster as cofactor. [2Fe-2S] cluster serves as cofactor.

The enzyme catalyses (4R,5S)-dethiobiotin + (sulfur carrier)-SH + 2 reduced [2Fe-2S]-[ferredoxin] + 2 S-adenosyl-L-methionine = (sulfur carrier)-H + biotin + 2 5'-deoxyadenosine + 2 L-methionine + 2 oxidized [2Fe-2S]-[ferredoxin]. It participates in cofactor biosynthesis; biotin biosynthesis; biotin from 7,8-diaminononanoate: step 2/2. Catalyzes the conversion of dethiobiotin (DTB) to biotin by the insertion of a sulfur atom into dethiobiotin via a radical-based mechanism. In Klebsiella pneumoniae (strain 342), this protein is Biotin synthase.